We begin with the raw amino-acid sequence, 355 residues long: 3-dehydroquinate synthase (355 aa).

NAD(+) contacts are provided by residues 105–109 (GVVGD), 129–130 (TS), K142, K151, and 169–172 (TLKT). The Zn(2+) site is built by E184, H246, and H263.

The protein belongs to the sugar phosphate cyclases superfamily. Dehydroquinate synthase family. NAD(+) serves as cofactor. The cofactor is Co(2+). Requires Zn(2+) as cofactor.

The protein localises to the cytoplasm. It catalyses the reaction 7-phospho-2-dehydro-3-deoxy-D-arabino-heptonate = 3-dehydroquinate + phosphate. It participates in metabolic intermediate biosynthesis; chorismate biosynthesis; chorismate from D-erythrose 4-phosphate and phosphoenolpyruvate: step 2/7. Functionally, catalyzes the conversion of 3-deoxy-D-arabino-heptulosonate 7-phosphate (DAHP) to dehydroquinate (DHQ). The chain is 3-dehydroquinate synthase from Streptococcus agalactiae serotype III (strain NEM316).